A 102-amino-acid polypeptide reads, in one-letter code: Small ribosomal subunit protein uS17 (102 aa).

Residues 1-27 form a disordered region; sequence MEQTEEHTDTHTDEQDEAVDRNDRKER.

This sequence belongs to the universal ribosomal protein uS17 family. As to quaternary structure, part of the 30S ribosomal subunit.

One of the primary rRNA binding proteins, it binds specifically to the 5'-end of 16S ribosomal RNA. The polypeptide is Small ribosomal subunit protein uS17 (Salinibacter ruber (strain DSM 13855 / M31)).